The chain runs to 470 residues: Uronate isomerase (470 aa).

Belongs to the metallo-dependent hydrolases superfamily. Uronate isomerase family.

The catalysed reaction is D-glucuronate = D-fructuronate. It catalyses the reaction aldehydo-D-galacturonate = keto-D-tagaturonate. It functions in the pathway carbohydrate metabolism; pentose and glucuronate interconversion. In Escherichia coli O17:K52:H18 (strain UMN026 / ExPEC), this protein is Uronate isomerase.